The following is a 232-amino-acid chain: Large ribosomal subunit protein uL1 (232 aa).

The protein belongs to the universal ribosomal protein uL1 family. As to quaternary structure, part of the 50S ribosomal subunit.

Functionally, binds directly to 23S rRNA. The L1 stalk is quite mobile in the ribosome, and is involved in E site tRNA release. In terms of biological role, protein L1 is also a translational repressor protein, it controls the translation of the L11 operon by binding to its mRNA. The sequence is that of Large ribosomal subunit protein uL1 from Burkholderia cenocepacia (strain ATCC BAA-245 / DSM 16553 / LMG 16656 / NCTC 13227 / J2315 / CF5610) (Burkholderia cepacia (strain J2315)).